The primary structure comprises 438 residues: MHSPIPELPRFERRLTGPRAAPSSPVSTNGSPLNNLVRSRLSDGALNFTGGRIATPLPQPSLKTPESPLSKRNPTIKQNRVRFDLPDDELSRSNVSSPEKTLLTSASTSTFDSLKKELLPELPSLAYSDDDEFPSSPEELNSHVNYPDVRNVYDCHTGLQPLVDHDCIEDRQKTFASKQLPTLPLQKSSKLSNRRPALHSFHSAPANSLYPLPTPTSQLPSNLSSNNLFQSDSLKPSMVSSHTSTKPVLYRGNSEKSCHSCGGSLRAGRIISASGKKLHPQCFKCDTCSQNLEHVGFYYREGKFYCHLDYHEQFSPRCKHCKTPIEDQAVHINNDWFHENHHFCAGCSEVFNVNIPCIYRDDLYWCQTCYDNKYAVKCKKCRKPILGISVKGSDGEYHSQCWTCGACNALLGDEGYFMIENTPICRPCKAISVKFNLD.

Disordered regions lie at residues 1–37 (MHSPIPELPRFERRLTGPRAAPSSPVSTNGSPLNNLV) and 49–78 (TGGRIATPLPQPSLKTPESPLSKRNPTIKQ). Positions 24-37 (SPVSTNGSPLNNLV) are enriched in polar residues. Ser67 and Ser96 each carry phosphoserine. LIM zinc-binding domains follow at residues 256 to 316 (KSCH…QFSP), 318 to 375 (CKHC…NKYA), and 376 to 435 (VKCK…SVKF).

The sequence is that of LIM domain-containing protein C4F6.12 from Schizosaccharomyces pombe (strain 972 / ATCC 24843) (Fission yeast).